Here is a 438-residue protein sequence, read N- to C-terminus: DEAD-box ATP-dependent RNA helicase CshB (438 aa).

Positions 4-32 (TKFELYELKPFIIDAVHRLGFYEPTDIQK) match the Q motif motif. The Helicase ATP-binding domain occupies 35-208 (IPAVLKKESV…KKYMENPKYA (174 aa)). 48–55 (SQTGTGKT) is an ATP binding site. The DEAD box signature appears at 156-159 (DEAD). The region spanning 235–385 (LLFDIMSHLN…EWKKGDDRQR (151 aa)) is the Helicase C-terminal domain. The tract at residues 380–438 (GDDRQRRKKRKKTPNEADEIAHRLVKKPKKVKPGYKKKMSYEMEKIKKKQRRNQSKKRK) is disordered. Positions 392–401 (TPNEADEIAH) are enriched in basic and acidic residues. Composition is skewed to basic residues over residues 402–417 (RLVK…YKKK) and 425–438 (IKKK…KKRK).

The protein belongs to the DEAD box helicase family. In terms of assembly, interacts with CspB when cells are transcriptionally active. May interact with RNA helicases CshA and DbpA (DeaD), may be a component of a possible RNA degradosome complex composed of rny, rnja, rnjb, pnp, pfkA and eno (although rnjA and rnjB's presence is unclear). Specifically interacts with pnp and rny.

The protein localises to the cytoplasm. Its subcellular location is the nucleoid. It catalyses the reaction ATP + H2O = ADP + phosphate + H(+). Functionally, DEAD-box RNA helicase that plays a role in 70S ribosome assembly. May work in conjunction with the cold shock proteins to ensure proper initiation of transcription at low and optimal temperatures. The sequence is that of DEAD-box ATP-dependent RNA helicase CshB from Bacillus subtilis (strain 168).